The following is a 310-amino-acid chain: Olfactory receptor 8I2 (310 aa).

Residues 1-25 lie on the Extracellular side of the membrane; that stretch reads MAGNNFTEVTVFILSGFANHPELQV. Asn5 carries N-linked (GlcNAc...) asparagine glycosylation. The helical transmembrane segment at 26-46 threads the bilayer; the sequence is SLFLMFLFIYLFTVLGNLGLI. Topologically, residues 47–54 are cytoplasmic; sequence TLIRMDSQ. A helical membrane pass occupies residues 55-75; the sequence is LHTPMYFFLSNLAFIDIFYSS. The Extracellular segment spans residues 76–99; it reads TVTPKALVNFQSNRRSISFVGCFV. A disulfide bond links Cys97 and Cys188. Residues 100–120 traverse the membrane as a helical segment; sequence QMYFFVGLVCCECFLLGSMAY. Topologically, residues 121-139 are cytoplasmic; sequence NRYIAICNPLLYSVVMSQK. Residues 140–160 form a helical membrane-spanning segment; the sequence is VSNWLGVMPYVIGFTSSLISV. At 161–196 the chain is on the extracellular side; that stretch reads WVISSLAFCDSSINHFFCDTTALLALSCVDTFGTEM. Residues 197–216 form a helical membrane-spanning segment; that stretch reads VSFVLAGFTLLSSLLIITVT. Over 217–236 the chain is Cytoplasmic; it reads YIIIISAILRIQSAAGRQKA. A helical transmembrane segment spans residues 237–257; sequence FSTCASHLMAVTIFYGSLIFT. At 258–270 the chain is on the extracellular side; that stretch reads YLQPDNTSSLTQA. A helical membrane pass occupies residues 271–291; that stretch reads QVASVFYTIVIPMLNPLIYSL. Topologically, residues 292–310 are cytoplasmic; that stretch reads RNKDVKNALLRVIHRKLFP.

It belongs to the G-protein coupled receptor 1 family.

It localises to the cell membrane. Odorant receptor. This Homo sapiens (Human) protein is Olfactory receptor 8I2 (OR8I2).